The primary structure comprises 126 residues: Glycerol dehydrogenase small subunit (126 aa).

4 consecutive transmembrane segments (helical) span residues W13–G33, G41–M61, A67–F87, and L92–V112.

Its subcellular location is the cell membrane. The enzyme catalyses glycerol + A = dihydroxyacetone + AH2. Catalyzes the oxidation of glycerol to glycerone. Also acts, more slowly, on a number of other polyols including D-sorbitol, D-arabinitol, D-mannitol, meso-erythritol, adonitol and propylene glycol. This chain is Glycerol dehydrogenase small subunit (sldB), found in Gluconobacter oxydans (strain 621H) (Gluconobacter suboxydans).